The chain runs to 223 residues: Deoxyribose-phosphate aldolase (223 aa).

The active-site Proton donor/acceptor is the aspartate 92. Lysine 158 acts as the Schiff-base intermediate with acetaldehyde in catalysis. Lysine 188 acts as the Proton donor/acceptor in catalysis.

This sequence belongs to the DeoC/FbaB aldolase family. DeoC type 1 subfamily.

It localises to the cytoplasm. It catalyses the reaction 2-deoxy-D-ribose 5-phosphate = D-glyceraldehyde 3-phosphate + acetaldehyde. It functions in the pathway carbohydrate degradation; 2-deoxy-D-ribose 1-phosphate degradation; D-glyceraldehyde 3-phosphate and acetaldehyde from 2-deoxy-alpha-D-ribose 1-phosphate: step 2/2. Functionally, catalyzes a reversible aldol reaction between acetaldehyde and D-glyceraldehyde 3-phosphate to generate 2-deoxy-D-ribose 5-phosphate. The protein is Deoxyribose-phosphate aldolase of Mycolicibacterium paratuberculosis (strain ATCC BAA-968 / K-10) (Mycobacterium paratuberculosis).